Reading from the N-terminus, the 1321-residue chain is Lysine-specific demethylase 3A (1321 aa).

A phosphoserine mark is found at S264 and S325. Disordered regions lie at residues 307–336, 383–402, and 438–472; these read ATPPSKDPRQQSTPQAANSPPNLGAKIPQG, LTEPKGSCTQPKTNTDQENR, and KHLEHAPSPSDVSNAPEVKAGVNSDSPNNCSGKKV. Over residues 316 to 327 the composition is skewed to polar residues; it reads QQSTPQAANSPP. At S445 the chain carries Phosphoserine. Residues 662–687 form a C6-type zinc finger; that stretch reads CDVCDTTIFNLHWVCPRCGFGVCVDC. S766 carries the phosphoserine modification. Positions 885–889 match the LXXLL motif motif; sequence LRNLL. An N6-acetyllysine modification is found at K895. In terms of domain architecture, JmjC spans 1058–1281; the sequence is MPSRFDDLMA…HCFWLTQEFR (224 aa). Fe cation is bound by residues H1120, D1122, and H1249.

Belongs to the JHDM2 histone demethylase family. Interacts with VRK1. Requires Fe(2+) as cofactor.

The protein resides in the cytoplasm. The protein localises to the nucleus. It carries out the reaction N(6),N(6)-dimethyl-L-lysyl(9)-[histone H3] + 2 2-oxoglutarate + 2 O2 = L-lysyl(9)-[histone H3] + 2 formaldehyde + 2 succinate + 2 CO2. Its function is as follows. Histone demethylase that specifically demethylates 'Lys-9' of histone H3, thereby playing a central role in histone code. Preferentially demethylates mono- and dimethylated H3 'Lys-9' residue, with a preference for dimethylated residue, while it has weak or no activity on trimethylated H3 'Lys-9'. Demethylation of Lys residue generates formaldehyde and succinate. Involved in hormone-dependent transcriptional activation, by participating in recruitment to androgen-receptor target genes, resulting in H3 'Lys-9' demethylation and transcriptional activation. Involved in spermatogenesis by regulating expression of target genes such as PRM1 and TNP1 which are required for packaging and condensation of sperm chromatin. Involved in obesity resistance through regulation of metabolic genes such as PPARA and UCP1. The chain is Lysine-specific demethylase 3A (KDM3A) from Homo sapiens (Human).